Reading from the N-terminus, the 465-residue chain is Hydroxyacid-oxoacid transhydrogenase, mitochondrial (465 aa).

The protein belongs to the iron-containing alcohol dehydrogenase family. Hydroxyacid-oxoacid transhydrogenase subfamily.

Its subcellular location is the mitochondrion. It carries out the reaction (S)-3-hydroxybutanoate + 2-oxoglutarate = (R)-2-hydroxyglutarate + acetoacetate. The catalysed reaction is 4-hydroxybutanoate + 2-oxoglutarate = (R)-2-hydroxyglutarate + succinate semialdehyde. In terms of biological role, catalyzes the cofactor-independent reversible oxidation of gamma-hydroxybutyrate (GHB) to succinic semialdehyde (SSA) coupled to reduction of 2-ketoglutarate (2-KG) to D-2-hydroxyglutarate (D-2-HG). L-3-hydroxybutyrate (L-3-OHB) is also a substrate for HOT when using 2-KG as hydrogen acceptor, resulting in the formation of D-2-HG. The chain is Hydroxyacid-oxoacid transhydrogenase, mitochondrial from Caenorhabditis briggsae.